The primary structure comprises 325 residues: MLLATALLIVGLLLVVYSADRLVFAASILCRTFGIPPLIIGMTVVSIGTSLPEVIVSLAASLHEQRDLAVGTALGSNIINILLILGLAALVRPFTVHSDVLRRELPLMLLVSVVAGSVLYDGQLSRSDGIFLLFLAVLWLLFIVKLARQAERQGTDSLTREQLAELPRDGGLPVAFLWLGIALIIMPVATRMVVDNATVLANYFAISELTMGLTAIAIGTSLPELATAIAGVRKGENDIAVGNIIGANIFNIVIVLGLPALITPGEIDPLAYSRDYSVMLLVSIIFALLCWRRSPQPGRGVGVLLTGGFIVWLAMLYWLSPILVE.

The Periplasmic portion of the chain corresponds to 1–5 (MLLAT). A helical transmembrane segment spans residues 6 to 26 (ALLIVGLLLVVYSADRLVFAA). The Cytoplasmic portion of the chain corresponds to 27–37 (SILCRTFGIPP). A helical transmembrane segment spans residues 38-58 (LIIGMTVVSIGTSLPEVIVSL). Over 59 to 67 (AASLHEQRD) the chain is Periplasmic. A helical transmembrane segment spans residues 68–88 (LAVGTALGSNIINILLILGLA). The Cytoplasmic portion of the chain corresponds to 89–104 (ALVRPFTVHSDVLRRE). Residues 105-125 (LPLMLLVSVVAGSVLYDGQLS) form a helical membrane-spanning segment. Arg126 is a topological domain (periplasmic). The chain crosses the membrane as a helical span at residues 127–147 (SDGIFLLFLAVLWLLFIVKLA). The Cytoplasmic segment spans residues 148–169 (RQAERQGTDSLTREQLAELPRD). Residues 170–190 (GGLPVAFLWLGIALIIMPVAT) form a helical membrane-spanning segment. The Periplasmic portion of the chain corresponds to 191-198 (RMVVDNAT). Residues 199 to 219 (VLANYFAISELTMGLTAIAIG) form a helical membrane-spanning segment. The Cytoplasmic portion of the chain corresponds to 220-243 (TSLPELATAIAGVRKGENDIAVGN). The chain crosses the membrane as a helical span at residues 244–264 (IIGANIFNIVIVLGLPALITP). Residues 265-269 (GEIDP) lie on the Periplasmic side of the membrane. A helical transmembrane segment spans residues 270–290 (LAYSRDYSVMLLVSIIFALLC). The Cytoplasmic portion of the chain corresponds to 291 to 302 (WRRSPQPGRGVG). The helical transmembrane segment at 303–323 (VLLTGGFIVWLAMLYWLSPIL) threads the bilayer. Residues 324 to 325 (VE) are Periplasmic-facing.

Belongs to the Ca(2+):cation antiporter (CaCA) (TC 2.A.19) family.

It localises to the cell inner membrane. This chain is Inner membrane protein YrbG (yrbG), found in Escherichia coli (strain K12).